We begin with the raw amino-acid sequence, 541 residues long: Interleukin-18 receptor 1 (541 aa).

A signal peptide spans 1-18 (MNCRELPLTLWVLISVST). Cystine bridges form between C22–C41 and C43–C81. The Extracellular segment spans residues 22-329 (CTSRPHITVV…ADIPGHVFTR (308 aa)). 3 Ig-like C2-type domains span residues 33 to 121 (GEPF…SCFT), 133 to 212 (KKFF…DRSN), and 220 to 312 (PKLN…KSFI). Residues N91, N102, N150, N197, N203, N236, N255, and N297 are each glycosylated (N-linked (GlcNAc...) asparagine). 2 cysteine pairs are disulfide-bonded: C119–C158 and C140–C185. Residues C237 and C298 are joined by a disulfide bond. The helical transmembrane segment at 330-350 (GMIIAVLILVAVVCLVTVCVI) threads the bilayer. The Cytoplasmic segment spans residues 351 to 541 (YRVDLVLFYR…PEVLPVLSES (191 aa)). One can recognise a TIR domain in the interval 373-520 (KTYDAFVSYL…RFWKNLLYLM (148 aa)). E455 is a catalytic residue.

It belongs to the interleukin-1 receptor family. In terms of assembly, forms a ternary complex with IL18 and IL18RAP. Within this complex, IL18R1 is involved in ligand-binding and IL18RAP in signaling leading to NF-kappa-B and JNK activation. Interacts with SLC12A3 in peritoneal macrophages; this interaction is increased by IL18 treatment. N-glycosylated. N-linked glycosyl chains contribute to ligand recognition and intra-receptor interactions required for formation of an active ternary receptor complex. Highly expressed in leukocytes, spleen, lung. Also expressed, but at lower levels, in liver, small intestine, colon, prostate, thymus, placenta, and heart. Specifically coexpressed with IL18R1 in Th1 cells.

It localises to the membrane. It catalyses the reaction NAD(+) + H2O = ADP-D-ribose + nicotinamide + H(+). Within the IL18 receptor complex, responsible for the binding of the pro-inflammatory cytokine IL18, but not IL1A nor IL1B. Involved in IL18-mediated IFNG synthesis from T-helper 1 (Th1) cells. Contributes to IL18-induced cytokine production, either independently of SLC12A3, or as a complex with SLC12A3. The protein is Interleukin-18 receptor 1 of Homo sapiens (Human).